A 382-amino-acid chain; its full sequence is uncharacterized protein (382 aa).

The first 25 residues, 1-25, serve as a signal peptide directing secretion; the sequence is MKKWMAAVFVMMLMLCFGGIENVKA. Serine 186 acts as the Nucleophile in catalysis. Active-site residues include aspartate 354 and histidine 357.

The protein belongs to the 'GDSL' lipolytic enzyme family.

This is an uncharacterized protein from Bacillus subtilis (strain 168).